Here is a 262-residue protein sequence, read N- to C-terminus: Phosphonates import ATP-binding protein PhnC (262 aa).

The 249-residue stretch at 5 to 253 (IRVEKLAKTF…RFDHLYRSIN (249 aa)) folds into the ABC transporter domain. Residue 37–44 (GPSGSGKS) participates in ATP binding.

This sequence belongs to the ABC transporter superfamily. Phosphonates importer (TC 3.A.1.9.1) family. In terms of assembly, the complex is composed of two ATP-binding proteins (PhnC), two transmembrane proteins (PhnE) and a solute-binding protein (PhnD).

The protein resides in the cell inner membrane. The catalysed reaction is phosphonate(out) + ATP + H2O = phosphonate(in) + ADP + phosphate + H(+). Part of the ABC transporter complex PhnCDE involved in phosphonates import. Responsible for energy coupling to the transport system. This Shigella dysenteriae serotype 1 (strain Sd197) protein is Phosphonates import ATP-binding protein PhnC.